The primary structure comprises 258 residues: tRNA pseudouridine synthase A (258 aa).

Aspartate 52 functions as the Nucleophile in the catalytic mechanism. Tyrosine 110 contacts substrate.

The protein belongs to the tRNA pseudouridine synthase TruA family. Homodimer.

The catalysed reaction is uridine(38/39/40) in tRNA = pseudouridine(38/39/40) in tRNA. Formation of pseudouridine at positions 38, 39 and 40 in the anticodon stem and loop of transfer RNAs. In Francisella tularensis subsp. holarctica (strain FTNF002-00 / FTA), this protein is tRNA pseudouridine synthase A.